Reading from the N-terminus, the 554-residue chain is Estrogen receptor beta (554 aa).

Residues 25 to 173 (TEIKNSPAGV…NPGSKKDAHF (149 aa)) form a modulating region. 2 NR C4-type zinc fingers span residues 174-194 (CAVC…CEGC) and 210-234 (CPAT…LRKC). A DNA-binding region (nuclear receptor) is located at residues 174 to 239 (CAVCSDYASG…RLRKCYEVGM (66 aa)). One can recognise an NR LBD domain in the interval 289-521 (SPEQFVLTLL…DLLLEMLNAH (233 aa)). The disordered stretch occupies residues 529–554 (PLATHPEFGPLEQMEPGESLRKGEPQ).

The protein belongs to the nuclear hormone receptor family. NR3 subfamily. In terms of assembly, binds DNA as a homodimer. Can form a heterodimer with ER-alpha. Brain, pituitary, skeletal muscle, liver, adrenal, kidney, intestine and ovary.

The protein resides in the nucleus. Its function is as follows. Binds estrogens with an affinity similar to that of ER-alpha, and activates expression of reporter genes containing estrogen response elements (ERE) in an estrogen-dependent manner. Locally synthesized estrogens may act via ER beta, in addition to ER alpha, to mediate seasonal or developmental effects on nearby song nuclei. In Sturnus vulgaris (Starling), this protein is Estrogen receptor beta (ESR2).